The chain runs to 44 residues: Small, acid-soluble spore protein P (44 aa).

The interval methionine 1 to methionine 44 is disordered. The span at asparagine 8 to glutamine 18 shows a compositional bias: basic and acidic residues. Over residues histidine 26–methionine 44 the composition is skewed to basic residues.

It belongs to the SspP family.

It is found in the spore core. The protein is Small, acid-soluble spore protein P of Bacillus cereus (strain ATCC 14579 / DSM 31 / CCUG 7414 / JCM 2152 / NBRC 15305 / NCIMB 9373 / NCTC 2599 / NRRL B-3711).